The chain runs to 88 residues: ATP synthase subunit 9, mitochondrial (88 aa).

2 consecutive transmembrane segments (helical) span residues 30–50 (IGLTGAGAGVGIVFAAFILAV) and 66–86 (LGFALSEAVGLLALMMSFLIL).

The protein belongs to the ATPase C chain family. F-type ATPases have 2 components, CF(1) - the catalytic core - and CF(0) - the membrane proton channel. CF(1) has five subunits: alpha(3), beta(3), gamma(1), delta(1), epsilon(1). CF(0) has three main subunits: a, b and c.

It localises to the mitochondrion membrane. Functionally, mitochondrial membrane ATP synthase (F(1)F(0) ATP synthase or Complex V) produces ATP from ADP in the presence of a proton gradient across the membrane which is generated by electron transport complexes of the respiratory chain. F-type ATPases consist of two structural domains, F(1) - containing the extramembraneous catalytic core and F(0) - containing the membrane proton channel, linked together by a central stalk and a peripheral stalk. During catalysis, ATP synthesis in the catalytic domain of F(1) is coupled via a rotary mechanism of the central stalk subunits to proton translocation. Part of the complex F(0) domain. A homomeric c-ring of probably 10 subunits is part of the complex rotary element. This Dictyostelium citrinum (Slime mold) protein is ATP synthase subunit 9, mitochondrial (atp9).